A 303-amino-acid polypeptide reads, in one-letter code: Glycine--tRNA ligase alpha subunit (303 aa).

Belongs to the class-II aminoacyl-tRNA synthetase family. Tetramer of two alpha and two beta subunits.

It is found in the cytoplasm. It catalyses the reaction tRNA(Gly) + glycine + ATP = glycyl-tRNA(Gly) + AMP + diphosphate. The protein is Glycine--tRNA ligase alpha subunit of Streptococcus equi subsp. zooepidemicus (strain H70).